We begin with the raw amino-acid sequence, 72 residues long: Translation initiation factor IF-1 (72 aa).

One can recognise an S1-like domain in the interval 1 to 72 (MAKEDCIEMQ…SKARIIFRAR (72 aa)).

Belongs to the IF-1 family. As to quaternary structure, component of the 30S ribosomal translation pre-initiation complex which assembles on the 30S ribosome in the order IF-2 and IF-3, IF-1 and N-formylmethionyl-tRNA(fMet); mRNA recruitment can occur at any time during PIC assembly.

The protein resides in the cytoplasm. Its function is as follows. One of the essential components for the initiation of protein synthesis. Stabilizes the binding of IF-2 and IF-3 on the 30S subunit to which N-formylmethionyl-tRNA(fMet) subsequently binds. Helps modulate mRNA selection, yielding the 30S pre-initiation complex (PIC). Upon addition of the 50S ribosomal subunit IF-1, IF-2 and IF-3 are released leaving the mature 70S translation initiation complex. The polypeptide is Translation initiation factor IF-1 (Haemophilus ducreyi (strain 35000HP / ATCC 700724)).